The following is a 324-amino-acid chain: Olfactory receptor 4K15 (324 aa).

Residues 1–25 lie on the Extracellular side of the membrane; it reads MNETNHSRVTEFVLLGLSSSRELQP. N-linked (GlcNAc...) asparagine glycosylation is found at Asn-2 and Asn-5. Residues 26–49 traverse the membrane as a helical segment; sequence FLFLTFSLLYLAILLGNFLIILTV. Over 50 to 57 the chain is Cytoplasmic; that stretch reads TSDSRLHT. Residues 58 to 79 form a helical membrane-spanning segment; it reads PMYFLLANLSFIDVCVASFATP. Residues 80–100 lie on the Extracellular side of the membrane; the sequence is KMIADFLVERKTISFDACLAQ. Cys-97 and Cys-189 are disulfide-bonded. The chain crosses the membrane as a helical span at residues 101–120; sequence IFFVHLFTGSEMVLLVSMAY. Residues 121 to 139 are Cytoplasmic-facing; the sequence is DRYVAICKPLHYMTVMSRR. Residues 140-158 traverse the membrane as a helical segment; the sequence is VCVVLVLISWFVGFIHTTS. Over 159–195 the chain is Extracellular; it reads QLAFTVNLPFCGPNKVDSFFCDLPLVTKLACIDTYVV. A helical transmembrane segment spans residues 196–219; the sequence is SLLIVADSGFLSLSSFLLLVVSYT. At 220–235 the chain is on the cytoplasmic side; the sequence is VILVTVRNRSSASMAK. A helical membrane pass occupies residues 236 to 258; that stretch reads ARSTLTAHITVVTLFFGPCIFIY. At 259–269 the chain is on the extracellular side; the sequence is VWPFSSYSVDK. Residues 270 to 289 form a helical membrane-spanning segment; the sequence is VLAVFYTIFTLILNPVIYTL. Topologically, residues 290-324 are cytoplasmic; that stretch reads RNKEVKAAMSKLKSRYLKPSQVSVVIRNVLFLETK.

It belongs to the G-protein coupled receptor 1 family.

Its subcellular location is the cell membrane. Odorant receptor. The sequence is that of Olfactory receptor 4K15 (OR4K15) from Homo sapiens (Human).